Consider the following 207-residue polypeptide: Ribosomal RNA small subunit methyltransferase G (207 aa).

Residues G73, L78, 124 to 125 (VE), and R139 each bind S-adenosyl-L-methionine.

This sequence belongs to the methyltransferase superfamily. RNA methyltransferase RsmG family.

The protein resides in the cytoplasm. It carries out the reaction guanosine(527) in 16S rRNA + S-adenosyl-L-methionine = N(7)-methylguanosine(527) in 16S rRNA + S-adenosyl-L-homocysteine. Specifically methylates the N7 position of guanine in position 527 of 16S rRNA. The chain is Ribosomal RNA small subunit methyltransferase G from Klebsiella pneumoniae (strain 342).